The sequence spans 402 residues: L-threonine ammonia-lyase (402 aa).

Lysine 51 carries the post-translational modification N6-(pyridoxal phosphate)lysine. Pyridoxal 5'-phosphate contacts are provided by residues asparagine 78, 178–181 (GGGL), and serine 302. The region spanning 327–402 (KLKVELDDLP…GVGYLVDVLK (76 aa)) is the ACT domain.

Belongs to the serine/threonine dehydratase family. Pyridoxal 5'-phosphate serves as cofactor.

The catalysed reaction is L-threonine = 2-oxobutanoate + NH4(+). It carries out the reaction L-serine = pyruvate + NH4(+). The protein operates within amino-acid biosynthesis; L-isoleucine biosynthesis; 2-oxobutanoate from L-threonine: step 1/1. Catalyzes the conversion of threonine to 2-oxobutanoate and ammonia. Functions in the threonine-dependent pathway of isoleucine biosynthesis, which is the minor pathway for isoleucine biosynthesis in G.sulfurreducens. Also displays serine ammonia-lyase activity, yielding pyruvate from L-serine. The sequence is that of L-threonine ammonia-lyase from Geobacter sulfurreducens (strain ATCC 51573 / DSM 12127 / PCA).